The primary structure comprises 300 residues: Probable amino-acid ABC transporter periplasmic-binding protein y4tE (300 aa).

Residues 1-27 form the signal peptide; the sequence is MTHLKISKTAPAVARFLPAGRIASVAA.

This sequence belongs to the bacterial solute-binding protein 3 family.

The protein resides in the periplasm. Its function is as follows. Probably part of the binding-protein-dependent transport system y4tEFGH for an amino acid. This chain is Probable amino-acid ABC transporter periplasmic-binding protein y4tE, found in Sinorhizobium fredii (strain NBRC 101917 / NGR234).